The chain runs to 915 residues: Scaffold attachment factor B1 (915 aa).

Over residues 1–24 (MAETLSGLGDSGAAGAAALSSASS) the composition is skewed to low complexity. The interval 1 to 33 (MAETLSGLGDSGAAGAAALSSASSETGTRRLSD) is disordered. A2 carries the N-acetylalanine modification. A phosphoserine mark is found at S24 and S55. Positions 31–65 (LSDLRVIDLRAELRKRNVDSSGNKSVLMERLKKAI) constitute an SAP domain. The interval 64 to 118 (AIEDEGGNPDEIEITSEGNKKTSKRSSKGRKPEEEGVEDNGLEENSGDGQEDVET) is disordered. Residues 67–77 (DEGGNPDEIEI) are compositionally biased toward acidic residues. Position 79 is a phosphoserine (S79). Residues 98 to 118 (EGVEDNGLEENSGDGQEDVET) show a composition bias toward acidic residues. Residues K172 and K186 each participate in a glycyl lysine isopeptide (Lys-Gly) (interchain with G-Cter in SUMO2) cross-link. T188 bears the Phosphothreonine mark. Phosphoserine is present on residues S195, S197, and S209. Residues 221–407 (LGETCKSEPV…EKGRSSCGRN (187 aa)) form a disordered region. A compositionally biased stretch (basic and acidic residues) spans 225–234 (CKSEPVKEES). K231 is covalently cross-linked (Glycyl lysine isopeptide (Lys-Gly) (interchain with G-Cter in SUMO)). The span at 275–286 (SESTAHAQSSKA) shows a compositional bias: polar residues. The span at 293–309 (VKREPAEQPGDGERTDC) shows a compositional bias: basic and acidic residues. K294 participates in a covalent cross-link: Glycyl lysine isopeptide (Lys-Gly) (interchain with G-Cter in SUMO). The span at 319-330 (EQSSAASELAEA) shows a compositional bias: low complexity. Positions 346-359 (EARDSKEDGRKFDF) are enriched in basic and acidic residues. A compositionally biased stretch (polar residues) spans 371–383 (ESSTSEGADQKMS). K381 is covalently cross-linked (Glycyl lysine isopeptide (Lys-Gly) (interchain with G-Cter in SUMO2)). 2 positions are modified to phosphoserine: S383 and S384. The segment covering 390–401 (DTKRLSKEEKGR) has biased composition (basic and acidic residues). K392 participates in a covalent cross-link: Glycyl lysine isopeptide (Lys-Gly) (interchain with G-Cter in SUMO2). The RRM domain maps to 406–484 (RNFWVSGLSS…KMISVEKAKN (79 aa)). S415 bears the Phosphoserine mark. Basic and acidic residues-rich tracts occupy residues 477 to 551 (ISVE…ERSR) and 559 to 570 (GTERTVVMDKSK). 3 disordered regions span residues 477-641 (ISVE…EREE), 671-708 (RERM…ERRP), and 749-915 (FDHR…TRRY). Residues K483, K514, K543, and K570 each participate in a glycyl lysine isopeptide (Lys-Gly) (interchain with G-Cter in SUMO2) cross-link. Residues 528–792 (GDDGSGEKSK…RHGGPERHGR (265 aa)) are interaction with POLR2A. Interaction with SFRS1; SFRS9 and SFRS10. K578 is covalently cross-linked (Glycyl lysine isopeptide (Lys-Gly) (interchain with G-Cter in SUMO1); alternate). A Glycyl lysine isopeptide (Lys-Gly) (interchain with G-Cter in SUMO2); alternate cross-link involves residue K578. A phosphoserine mark is found at S580, S582, S601, and S604. Basic and acidic residues predominate over residues 581-641 (GSKERASKSQ…RMQAQWEREE (61 aa)). The Nuclear localization signal signature appears at 599-616 (KRSVVSFDKVKEPRKSRD). The interaction with SAFB2 stretch occupies residues 599-915 (KRSVVSFDKV…PSDARFTRRY (317 aa)). N6-acetyllysine is present on K607. A compositionally biased stretch (basic and acidic residues) spans 749–796 (FDHRDRGRYPDHSVDRREGSRSMMGEREGQHYPERHGGPERHGRDSRD). At R811 the chain carries Omega-N-methylarginine. Composition is skewed to basic and acidic residues over residues 817 to 832 (PRRD…DDRS) and 841 to 851 (MMDRDHKRWQG). K847 participates in a covalent cross-link: Glycyl lysine isopeptide (Lys-Gly) (interchain with G-Cter in SUMO2). Asymmetric dimethylarginine occurs at positions 868, 874, and 884. Positions 892–901 (GMQGGFGGQS) are enriched in gly residues. Over residues 905–915 (RPSDARFTRRY) the composition is skewed to basic and acidic residues.

In terms of assembly, monomer and homodimer. Forms heterodimers with SAFB2. Interacts with KHDRBS3. Interacts with CLK2. Interacts with POLR2A, SRSF1/ASF, SRSF9/SRp30c and SFSF10/TRA2B. Interacts with isoform 1 and isoform 2 of SRPK1 and inhibits its activity. Interacts with RBMX. Interacts with FUS. Interacts with ZBED4. In terms of processing, sumoylated by PIAS1 with SUMO1 and SUMO2/3, desumoylated by SENP1. Sumoylation is required for transcriptional repressor activity. In terms of tissue distribution, ubiquitous. Expressed at high levels in the CNS and at low levels in the liver. Expressed in a wide number of breast cancer cell lines.

It is found in the nucleus. Functionally, binds to scaffold/matrix attachment region (S/MAR) DNA and forms a molecular assembly point to allow the formation of a 'transcriptosomal' complex (consisting of SR proteins and RNA polymerase II) coupling transcription and RNA processing. Functions as an estrogen receptor corepressor and can also bind to the HSP27 promoter and decrease its transcription. Thereby acts as a negative regulator of cell proliferation. When associated with RBMX, binds to and stimulates transcription from the SREBF1 promoter. This Homo sapiens (Human) protein is Scaffold attachment factor B1 (SAFB).